The chain runs to 364 residues: Medium-wave-sensitive opsin 2 (364 aa).

Residues methionine 1–threonine 23 are disordered. Over methionine 1–valine 52 the chain is Extracellular. The interval aspartate 17–proline 43 is required for 11-cis-retinal regeneration. N-linked (GlcNAc...) asparagine glycosylation occurs at asparagine 34. A helical transmembrane segment spans residues tyrosine 53–alanine 77. The Cytoplasmic segment spans residues threonine 78–asparagine 89. The chain crosses the membrane as a helical span at residues tryptophan 90–valine 115. At tyrosine 116 to glutamate 129 the chain is on the extracellular side. Cysteine 126 and cysteine 203 are joined by a disulfide. Residues glycine 130–tryptophan 149 form a helical membrane-spanning segment. Residues glutamate 150–leucine 168 are Cytoplasmic-facing. The helical transmembrane segment at alanine 169–serine 192 threads the bilayer. The Extracellular portion of the chain corresponds to arginine 193–serine 218. A helical membrane pass occupies residues tyrosine 219 to isoleucine 246. Topologically, residues arginine 247–arginine 268 are cytoplasmic. A helical transmembrane segment spans residues methionine 269–alanine 292. Topologically, residues alanine 293–histidine 300 are extracellular. A helical membrane pass occupies residues proline 301–methionine 325. The residue at position 312 (lysine 312) is an N6-(retinylidene)lysine. Residues asparagine 326–alanine 364 are Cytoplasmic-facing.

Belongs to the G-protein coupled receptor 1 family. Opsin subfamily. N-glycosylated. O-glycosylated. Post-translationally, phosphorylated on some or all of the serine and threonine residues present in the C-terminal region.

Its subcellular location is the cell membrane. Functionally, visual pigments are the light-absorbing molecules that mediate vision. They consist of an apoprotein, opsin, covalently linked to cis-retinal. This is Medium-wave-sensitive opsin 2 from Homo sapiens (Human).